The chain runs to 235 residues: Pathogen-related protein (235 aa).

The protein is Pathogen-related protein of Hordeum vulgare (Barley).